Consider the following 114-residue polypeptide: MTSTSVYFNDYYNRRASSSKLELCMSPSSSTISKSHSLDEIPDVSARRRHPSLGFLEFSKTANFRSRRDAVFEPLEFQRVLVTVTSAQIVESSQKRKPEESTIGMDAPKKMKRG.

Residues 90–114 (VESSQKRKPEESTIGMDAPKKMKRG) are disordered.

This is an uncharacterized protein from Caenorhabditis elegans.